A 198-amino-acid chain; its full sequence is Recombination protein RecR (198 aa).

The C4-type zinc finger occupies 57-72; it reads CSSCGHITDKDPCYIC. A Toprim domain is found at 80 to 175; sequence SIICVVQDPK…KITRIAHGLP (96 aa).

Belongs to the RecR family.

May play a role in DNA repair. It seems to be involved in an RecBC-independent recombinational process of DNA repair. It may act with RecF and RecO. The protein is Recombination protein RecR of Anoxybacillus flavithermus (strain DSM 21510 / WK1).